The primary structure comprises 217 residues: Transcriptional regulatory protein CutR (217 aa).

The Response regulatory domain occupies 2–116; it reads RVLVVEDEQL…ELIARVRALG (115 aa). Residue Asp51 is modified to 4-aspartylphosphate. The segment at residues 124-217 is a DNA-binding region (ompR/PhoB-type); it reads PPVLERAGIK…VTVPGSGYRI (94 aa).

Member of the two-component regulatory system CutS/CutR, involved in the regulation of copper metabolism. CutR suppresses a defective melC1 gene, encoding a putative copper-transfer gene, probably by altering copper metabolism. The protein is Transcriptional regulatory protein CutR (cutR) of Streptomyces lividans.